Reading from the N-terminus, the 276-residue chain is F420-dependent methylenetetrahydromethanopterin dehydrogenase (276 aa).

The protein belongs to the MTD family.

It catalyses the reaction 5,10-methylenetetrahydromethanopterin + oxidized coenzyme F420-(gamma-L-Glu)(n) + 2 H(+) = 5,10-methenyl-5,6,7,8-tetrahydromethanopterin + reduced coenzyme F420-(gamma-L-Glu)(n). It functions in the pathway one-carbon metabolism; methanogenesis from CO(2); 5,10-methylene-5,6,7,8-tetrahydromethanopterin from 5,10-methenyl-5,6,7,8-tetrahydromethanopterin (coenzyme F420 route): step 1/1. Functionally, catalyzes the reversible reduction of methenyl-H(4)MPT(+) to methylene-H(4)MPT. The chain is F420-dependent methylenetetrahydromethanopterin dehydrogenase from Methanococcus vannielii (strain ATCC 35089 / DSM 1224 / JCM 13029 / OCM 148 / SB).